A 61-amino-acid polypeptide reads, in one-letter code: Photosystem II reaction center protein K (61 aa).

Positions Met1–Gly24 are excised as a propeptide. The chain crosses the membrane as a helical span at residues Met40–Phe60.

It belongs to the PsbK family. In terms of assembly, PSII is composed of 1 copy each of membrane proteins PsbA, PsbB, PsbC, PsbD, PsbE, PsbF, PsbH, PsbI, PsbJ, PsbK, PsbL, PsbM, PsbT, PsbX, PsbY, PsbZ, Psb30/Ycf12, at least 3 peripheral proteins of the oxygen-evolving complex and a large number of cofactors. It forms dimeric complexes.

Its subcellular location is the plastid. The protein localises to the chloroplast thylakoid membrane. Its function is as follows. One of the components of the core complex of photosystem II (PSII). PSII is a light-driven water:plastoquinone oxidoreductase that uses light energy to abstract electrons from H(2)O, generating O(2) and a proton gradient subsequently used for ATP formation. It consists of a core antenna complex that captures photons, and an electron transfer chain that converts photonic excitation into a charge separation. The polypeptide is Photosystem II reaction center protein K (Jasminum nudiflorum (Winter jasmine)).